The following is a 739-amino-acid chain: Phosphoribosylformylglycinamidine synthase subunit PurL (739 aa).

The active site involves H54. ATP-binding residues include Y57 and K96. E98 lines the Mg(2+) pocket. Substrate contacts are provided by residues 99 to 102 (SHNH) and R121. Catalysis depends on H100, which acts as the Proton acceptor. Residue D122 coordinates Mg(2+). Q245 lines the substrate pocket. Mg(2+) is bound at residue D273. 317–319 (ESQ) lines the substrate pocket. The ATP site is built by D500 and G537. A Mg(2+)-binding site is contributed by N538. S540 serves as a coordination point for substrate.

This sequence belongs to the FGAMS family. As to quaternary structure, monomer. Part of the FGAM synthase complex composed of 1 PurL, 1 PurQ and 2 PurS subunits.

It is found in the cytoplasm. The catalysed reaction is N(2)-formyl-N(1)-(5-phospho-beta-D-ribosyl)glycinamide + L-glutamine + ATP + H2O = 2-formamido-N(1)-(5-O-phospho-beta-D-ribosyl)acetamidine + L-glutamate + ADP + phosphate + H(+). Its pathway is purine metabolism; IMP biosynthesis via de novo pathway; 5-amino-1-(5-phospho-D-ribosyl)imidazole from N(2)-formyl-N(1)-(5-phospho-D-ribosyl)glycinamide: step 1/2. Functionally, part of the phosphoribosylformylglycinamidine synthase complex involved in the purines biosynthetic pathway. Catalyzes the ATP-dependent conversion of formylglycinamide ribonucleotide (FGAR) and glutamine to yield formylglycinamidine ribonucleotide (FGAM) and glutamate. The FGAM synthase complex is composed of three subunits. PurQ produces an ammonia molecule by converting glutamine to glutamate. PurL transfers the ammonia molecule to FGAR to form FGAM in an ATP-dependent manner. PurS interacts with PurQ and PurL and is thought to assist in the transfer of the ammonia molecule from PurQ to PurL. In Bacillus mycoides (strain KBAB4) (Bacillus weihenstephanensis), this protein is Phosphoribosylformylglycinamidine synthase subunit PurL.